The sequence spans 495 residues: MRINPTTSGPAVSTLDEKNLGHIAQIIGPVLDVVFPPGKMPNIYNALVVKGRDTVGQQINVTCEVQQLLGNNRVRAVAMSATDGLTRGMEVIDTGAPLSVPVGGATLGRIFNVLGEPVDNLGPVDTRTTSPIHRSAPAFIQLDTKLSIFETGIKVVDLLAPYRRGGKIGLFGGAGVGKTVLIMELINNIAKAHGGVSVFGGVGERTREGNDLYMEMKESGVINEKNIAESKVALVYGQMNEPPGARMRVGLTALTMAEYFRDVNEQDVLLFIDNIFRFVQAGSEVSALLGRMPSAVGYQPTLSTEMGSLQERITSTKEGSITSIQAVYVPADDLTDPAPATTFAHLDATTVLSRGLAAKGIYPAVDPLDSTSTMLQPGIVGEEHYETAQKVKQTSQRYKELQDIIAILGLDELSEEDRLTVARARKIERFLSQPFFVAEVFTGSPGKYVGLAETVRGFQLILSGELDSLPEQAFYLVGNIDEATAKAMNLEGENK.

Residue 172–179 participates in ATP binding; sequence GGAGVGKT.

The protein belongs to the ATPase alpha/beta chains family. In terms of assembly, F-type ATPases have 2 components, CF(1) - the catalytic core - and CF(0) - the membrane proton channel. CF(1) has five subunits: alpha(3), beta(3), gamma(1), delta(1), epsilon(1). CF(0) has four main subunits: a(1), b(1), b'(1) and c(9-12).

Its subcellular location is the plastid. It is found in the chloroplast thylakoid membrane. The catalysed reaction is ATP + H2O + 4 H(+)(in) = ADP + phosphate + 5 H(+)(out). In terms of biological role, produces ATP from ADP in the presence of a proton gradient across the membrane. The catalytic sites are hosted primarily by the beta subunits. The protein is ATP synthase subunit beta, chloroplastic of Beaucarnea recurvata (Elephant-foot tree).